The sequence spans 276 residues: MAIRSYRILTPDTHNRSVSGFDGRVQLDPQKKLTSGQHHCGKGRNARGIITARHRGGGHKRLYRQIDFRRDKEHISGEIVTIEYDPNRSAYICKVHYKNGDKMYILHPRGVMIGDTILSGPKAPISIGNVLPLTNMPLGTAIHNIEITLGKGGQLARAAGAVAELIAKEDRSATLRLPSGEVRLISENCSATIGQVGNITANNRSFGKAGAKRWLGKRSEVRGVAMNPVDHPHGGGEGRTPIGRKKPVTPWGYSALGKKSRKRNRYSDASILRRRE.

Positions 225–276 (AMNPVDHPHGGGEGRTPIGRKKPVTPWGYSALGKKSRKRNRYSDASILRRRE) are disordered.

The protein belongs to the universal ribosomal protein uL2 family. As to quaternary structure, part of the 50S ribosomal subunit.

The protein resides in the plastid. The protein localises to the chloroplast. This is Large ribosomal subunit protein uL2c (rpl2) from Pinus koraiensis (Korean pine).